Consider the following 278-residue polypeptide: MADS-box transcription factor PHERES 2 (278 aa).

The MADS-box domain maps to 1-60 (MKRKMKLSLIENSVSRKTTFTKRKKGMTKKLTELVTLCGVEACAVVYSPFNSIPEAWPSR).

As to quaternary structure, interacts with AGL61/DIANA and AGL62. In terms of tissue distribution, male gametophyte, embryo and endosperm.

Its subcellular location is the nucleus. Functionally, probable transcription factor involved in the development of gametophytes and seeds. The polypeptide is MADS-box transcription factor PHERES 2 (PHE2) (Arabidopsis thaliana (Mouse-ear cress)).